The following is a 581-amino-acid chain: Phosphatidylinositol N-acetylglucosaminyltransferase subunit Q (581 aa).

5 helical membrane passes run 276–298 (ANMLVSVLLDVALGLLLLSWLHS), 344–366 (LGRFFLYHIHLWISYIHLMSPFI), 381–403 (LTVALSIFSDIIALLTFHIYCFY), 446–468 (LFIGTLLFTILVFLLPTTALYYL), and 478–500 (ITVQGLIHLLVDLINSLPLYSLG).

Belongs to the PIGQ family. Component of the glycosylphosphatidylinositol-N-acetylglucosaminyltransferase (GPI-GnT) complex composed at least by PIGA, PIGC, PIGH, PIGP, PIGQ, PIGY and DPM2. Interacts with PIGA, PIGH and PIGC.

The protein resides in the membrane. The protein operates within glycolipid biosynthesis; glycosylphosphatidylinositol-anchor biosynthesis. Functionally, part of the glycosylphosphatidylinositol-N-acetylglucosaminyltransferase (GPI-GnT) complex that catalyzes the transfer of N-acetylglucosamine from UDP-N-acetylglucosamine to phosphatidylinositol and participates in the first step of GPI biosynthesis. In Mus musculus (Mouse), this protein is Phosphatidylinositol N-acetylglucosaminyltransferase subunit Q.